A 524-amino-acid polypeptide reads, in one-letter code: Caffeate CoA-transferase (524 aa).

The active-site 5-glutamyl coenzyme A thioester intermediate is the Glu-323.

Belongs to the 3-oxoacid CoA-transferase family. In terms of assembly, homodimer.

The enzyme catalyses hydrocaffeoyl-CoA + (E)-caffeate = 3-(3,4-dihydroxyphenyl)propanoate + (E)-caffeoyl-CoA. Involved in caffeate respiration, which consists in the reduction of the C-C double bond of caffeate. CarA catalyzes an energy-saving CoA loop for caffeate activation in the steady state of caffeate respiration. It catalyzes the formation of caffeyl-CoA from caffeate with hydrocaffeyl-CoA as the CoA donor via a ping-pong mechanism. In addition to caffeate, the enzyme can utilize 4-coumarate or ferulate as CoA acceptor. Neither acetyl-CoA nor butyryl-CoA served as the CoA donor. The sequence is that of Caffeate CoA-transferase from Acetobacterium woodii.